Here is a 556-residue protein sequence, read N- to C-terminus: Glutamine--tRNA ligase (556 aa).

The short motif at 35-45 is the 'HIGH' region element; the sequence is PEPNGYLHIGH. Residues 36 to 38 and 42 to 48 contribute to the ATP site; these read EPN and HIGHAKS. 2 residues coordinate L-glutamine: D68 and Y213. Residues T232 and 262–263 each bind ATP; that span reads RL. Positions 269 to 273 match the 'KMSKS' region motif; sequence VTSKR.

Belongs to the class-I aminoacyl-tRNA synthetase family. In terms of assembly, monomer.

It localises to the cytoplasm. The catalysed reaction is tRNA(Gln) + L-glutamine + ATP = L-glutaminyl-tRNA(Gln) + AMP + diphosphate. This is Glutamine--tRNA ligase from Pseudomonas aeruginosa (strain ATCC 15692 / DSM 22644 / CIP 104116 / JCM 14847 / LMG 12228 / 1C / PRS 101 / PAO1).